Consider the following 1105-residue polypeptide: Lysylphosphatidylglycerol biosynthesis bifunctional protein LysX (1105 aa).

The phosphatidylglycerol lysyltransferase stretch occupies residues 1–603 (MTVTKPRSVQ…LLHHDGSAPD (603 aa)). 7 helical membrane passes run 20 to 40 (VPAAAGWAVGVIATLSLLASI), 62 to 82 (FPDTSFAWSFVLALLAAALAA), 86 to 106 (IAWLLLLTNVVLAAFLNAADI), 117 to 137 (FGENLGFAVHVVAIVVLVLGY), 154 to 174 (AVLVAGGAIGILVSWGLVELF), 186 to 203 (YVANRVIGFALADPDLFT), and 208 to 228 (VFLNAMFGLFGALALIAATIV). Positions 604–1105 (VSGLRQSAIA…TLPFPLAKPH (502 aa)) are lysine--tRNA ligase. Mg(2+) is bound by residues Asp-1017 and Glu-1024.

The protein in the N-terminal section; belongs to the LPG synthetase family. In the C-terminal section; belongs to the class-II aminoacyl-tRNA synthetase family. It depends on Mg(2+) as a cofactor.

The protein resides in the cell membrane. It carries out the reaction tRNA(Lys) + L-lysine + ATP = L-lysyl-tRNA(Lys) + AMP + diphosphate. The enzyme catalyses L-lysyl-tRNA(Lys) + a 1,2-diacyl-sn-glycero-3-phospho-(1'-sn-glycerol) = a 1,2-diacyl-sn-glycero-3-phospho-1'-(3'-O-L-lysyl)-sn-glycerol + tRNA(Lys). Its function is as follows. Catalyzes the production of L-lysyl-tRNA(Lys)transfer and the transfer of a lysyl group from L-lysyl-tRNA(Lys) to membrane-bound phosphatidylglycerol (PG), which produces lysylphosphatidylglycerol (LPG), one of the components of the bacterial membrane with a positive net charge. LPG synthesis contributes to the resistance to cationic antimicrobial peptides (CAMPs) and likely protects M.tuberculosis against the CAMPs produced by competiting microorganisms (bacteriocins). In fact, the modification of anionic phosphatidylglycerol with positively charged L-lysine results in repulsion of the peptides. This chain is Lysylphosphatidylglycerol biosynthesis bifunctional protein LysX (lysX), found in Mycobacterium marinum (strain ATCC BAA-535 / M).